A 486-amino-acid chain; its full sequence is Cardiolipin synthase A (486 aa).

Helical transmembrane passes span 3–23 (TFYTVVNWLVILGYWLLIAGV) and 38–58 (MAWLLIIYILPLVGIIAYLSF). PLD phosphodiesterase domains are found at residues 219–246 (MDLRQHRKMVMIDNYIAYTGSMNMVDPR) and 399–426 (EGGLLHTKSVLVDGELSLVGTVNLDMRS). Active-site residues include histidine 224, lysine 226, aspartate 231, histidine 404, lysine 406, and aspartate 411.

Belongs to the phospholipase D family. Cardiolipin synthase subfamily. ClsA sub-subfamily.

The protein resides in the cell inner membrane. The enzyme catalyses 2 a 1,2-diacyl-sn-glycero-3-phospho-(1'-sn-glycerol) = a cardiolipin + glycerol. Its function is as follows. Catalyzes the reversible phosphatidyl group transfer from one phosphatidylglycerol molecule to another to form cardiolipin (CL) (diphosphatidylglycerol) and glycerol. The polypeptide is Cardiolipin synthase A (Klebsiella pneumoniae subsp. pneumoniae (strain ATCC 700721 / MGH 78578)).